A 190-amino-acid chain; its full sequence is Potassium-transporting ATPase KdpC subunit (190 aa).

A helical membrane pass occupies residues 10–30; that stretch reads TFLFLLLITGGVYPLLTTALG.

Belongs to the KdpC family. As to quaternary structure, the system is composed of three essential subunits: KdpA, KdpB and KdpC.

The protein localises to the cell inner membrane. In terms of biological role, part of the high-affinity ATP-driven potassium transport (or Kdp) system, which catalyzes the hydrolysis of ATP coupled with the electrogenic transport of potassium into the cytoplasm. This subunit acts as a catalytic chaperone that increases the ATP-binding affinity of the ATP-hydrolyzing subunit KdpB by the formation of a transient KdpB/KdpC/ATP ternary complex. The polypeptide is Potassium-transporting ATPase KdpC subunit (Escherichia coli O127:H6 (strain E2348/69 / EPEC)).